The chain runs to 309 residues: MSGDQHADRSSGEKSNGDQDDTVDAKPDRSSRLSLFAKKKKNGEEEQPKSSLSNQYRIVTPTFQYNMNYKKVGKCIIINNKNFEDKTGMGTRNGTDKDAGDLSKSFRSLGFDVYTYNDRSCEDMQTLLKQAAEENHSDAACFACILLSHGEEGLIYGTDGPMAIKHLTTLFRGDKCKTLIGKPKLFFIQACRGSEFDEGIQTDSGPANDTLETDANPRYKIPVEADFLFAYSTVPGYYSWRNPGRGSWFVQSLCSVLNEHGKQLEIMQILTRVNYVVATNFESQSDDPRFSEKKQIPCVVSMLTKELYF.

A propeptide spans 1-24 (MSGDQHADRSSGEKSNGDQDDTVD) (N-terminally processed). Positions 1–31 (MSGDQHADRSSGEKSNGDQDDTVDAKPDRSS) are enriched in basic and acidic residues. The segment at 1-53 (MSGDQHADRSSGEKSNGDQDDTVDAKPDRSSRLSLFAKKKKNGEEEQPKSSLS) is disordered. The exosite stretch occupies residues 39–42 (KKKN). Residues 81–92 (KNFEDKTGMGTR) are loop L1. Catalysis depends on residues H149 and C191. Residues 192–201 (RGSEFDEGIQ) form a loop L2 region. A propeptide spanning residues 204–214 (SGPANDTLETD) is cleaved from the precursor. A loop L3 region spans residues 234–246 (VPGYYSWRNPGRG). The segment at 282–296 (ESQSDDPRFSEKKQI) is loop L4.

This sequence belongs to the peptidase C14A family. As to quaternary structure, heterotetramer that consists of two anti-parallel arranged heterodimers, each one formed by a 20 kDa (p20) and a 11 kDa (p11) subunit. In terms of processing, cleavage by different proteases, such as granzyme B (GZMB), caspase-1 (CASP1), caspase-8 (CASP8) or caspase-9 (CASP9) generate the two active subunits. Its involvement in different programmed cell death processes is probably specified by the protease that activates CASP7. Cleaved and activated by initiator caspases (CASP8 and/or CASP9), leading to execution phase of apoptosis. Cleavage and maturation by GZMB regulates granzyme-mediated programmed cell death. Cleaved and activated by CASP1 in response to bacterial infection.

It localises to the cytoplasm. The protein localises to the cytosol. The protein resides in the nucleus. Its subcellular location is the secreted. It is found in the extracellular space. It carries out the reaction Strict requirement for an Asp residue at position P1 and has a preferred cleavage sequence of Asp-Glu-Val-Asp-|-.. During activation, the N-terminal disordered prodomain is removed by cleavage. Concomitantly, double cleavage gives rise to a large Caspase-7 subunit p20 and a small Caspase-7 subunit p11. The two large and two small subunits then assemble to form the active CASP7 complex. Can be cleaved and activated by different caspases, depending on the context. Cleaved and activated by initiator caspases (CASP8 and/or CASP9), leading to execution phase of apoptosis. Cleavage and maturation by GZMB regulates granzyme-mediated programmed cell death. Cleavage and maturation by CASP1 regulates pyroptosis. Inhibited by BIRC6; following inhibition of BIRC6-caspase binding by DIABLO/SMAC, BIRC6 is subjected to caspase cleavage, leading to an increase in active caspases. Functionally, thiol protease involved in different programmed cell death processes, such as apoptosis, pyroptosis or granzyme-mediated programmed cell death, by proteolytically cleaving target proteins. Has a marked preference for Asp-Glu-Val-Asp (DEVD) consensus sequences, with some plasticity for alternate non-canonical sequences. Its involvement in the different programmed cell death processes is probably determined by upstream proteases that activate CASP7. Acts as an effector caspase involved in the execution phase of apoptosis: following cleavage and activation by initiator caspases (CASP8 and/or CASP9), mediates execution of apoptosis by catalyzing cleavage of proteins. Compared to CASP3, acts as a minor executioner caspase and cleaves a limited set of target proteins. Acts as a key regulator of the inflammatory response in response to bacterial infection by catalyzing cleavage and activation of the sphingomyelin phosphodiesterase SMPD1 in the extracellular milieu, thereby promoting membrane repair. Cleaves BIRC6 following inhibition of BIRC6-caspase binding by DIABLO/SMAC. The chain is Caspase-7 from Gallus gallus (Chicken).